The sequence spans 245 residues: 4-hydroxy-tetrahydrodipicolinate reductase (245 aa).

NAD(+) contacts are provided by residues 7–12 (GAKGKV), 75–77 (GTT), and 102–105 (APNF). Catalysis depends on H132, which acts as the Proton donor/acceptor. H133 is a binding site for (S)-2,3,4,5-tetrahydrodipicolinate. The active-site Proton donor is K136. A (S)-2,3,4,5-tetrahydrodipicolinate-binding site is contributed by 142-143 (GT).

This sequence belongs to the DapB family.

It localises to the cytoplasm. It catalyses the reaction (S)-2,3,4,5-tetrahydrodipicolinate + NAD(+) + H2O = (2S,4S)-4-hydroxy-2,3,4,5-tetrahydrodipicolinate + NADH + H(+). The enzyme catalyses (S)-2,3,4,5-tetrahydrodipicolinate + NADP(+) + H2O = (2S,4S)-4-hydroxy-2,3,4,5-tetrahydrodipicolinate + NADPH + H(+). Its pathway is amino-acid biosynthesis; L-lysine biosynthesis via DAP pathway; (S)-tetrahydrodipicolinate from L-aspartate: step 4/4. Functionally, catalyzes the conversion of 4-hydroxy-tetrahydrodipicolinate (HTPA) to tetrahydrodipicolinate. The polypeptide is 4-hydroxy-tetrahydrodipicolinate reductase (Mycobacterium tuberculosis (strain ATCC 25177 / H37Ra)).